The sequence spans 1359 residues: DNA-directed RNA polymerase subunit beta (1359 aa).

The protein belongs to the RNA polymerase beta chain family. As to quaternary structure, the RNAP catalytic core consists of 2 alpha, 1 beta, 1 beta' and 1 omega subunit. When a sigma factor is associated with the core the holoenzyme is formed, which can initiate transcription.

It catalyses the reaction RNA(n) + a ribonucleoside 5'-triphosphate = RNA(n+1) + diphosphate. Functionally, DNA-dependent RNA polymerase catalyzes the transcription of DNA into RNA using the four ribonucleoside triphosphates as substrates. In Nitrosococcus oceani (strain ATCC 19707 / BCRC 17464 / JCM 30415 / NCIMB 11848 / C-107), this protein is DNA-directed RNA polymerase subunit beta.